The sequence spans 250 residues: Acetylglutamate kinase (250 aa).

Substrate contacts are provided by residues G41–G42, R63, and N156.

It belongs to the acetylglutamate kinase family. ArgB subfamily.

The protein resides in the cytoplasm. The enzyme catalyses N-acetyl-L-glutamate + ATP = N-acetyl-L-glutamyl 5-phosphate + ADP. Its pathway is amino-acid biosynthesis; L-arginine biosynthesis; N(2)-acetyl-L-ornithine from L-glutamate: step 2/4. Catalyzes the ATP-dependent phosphorylation of N-acetyl-L-glutamate. The sequence is that of Acetylglutamate kinase from Listeria monocytogenes serotype 4b (strain F2365).